A 208-amino-acid polypeptide reads, in one-letter code: Small ribosomal subunit protein eS1 (208 aa).

It belongs to the eukaryotic ribosomal protein eS1 family.

The sequence is that of Small ribosomal subunit protein eS1 from Saccharolobus islandicus (strain Y.N.15.51 / Yellowstone #2) (Sulfolobus islandicus).